The chain runs to 178 residues: MNATPAPADDLIVIGKIYSVHGVRGEVKVFSFTDPIKNLLDYKTWTLKREGSVKQVELVSGRGNDKFLVAKLKGLDDREEARLLAGYEICVPRSLFPELTDGEYYWYQLQGLKVIDGLGQLLGKIDHLLETGSNDVMVVKPCAGSLDDRERLLPYTEQCVLAVDLAAGEMKVEWDADF.

A PRC barrel domain is found at 101–178 (DGEYYWYQLQ…EMKVEWDADF (78 aa)).

This sequence belongs to the RimM family. Binds ribosomal protein uS19.

The protein resides in the cytoplasm. Its function is as follows. An accessory protein needed during the final step in the assembly of 30S ribosomal subunit, possibly for assembly of the head region. Essential for efficient processing of 16S rRNA. May be needed both before and after RbfA during the maturation of 16S rRNA. It has affinity for free ribosomal 30S subunits but not for 70S ribosomes. The protein is Ribosome maturation factor RimM of Pseudomonas fluorescens (strain ATCC BAA-477 / NRRL B-23932 / Pf-5).